The chain runs to 396 residues: Probable tRNA sulfurtransferase (396 aa).

One can recognise a THUMP domain in the interval 63–166 (AAAARASARV…GRRAYFFDTI (104 aa)). ATP is bound by residues 184–185 (LY), Arg-266, Gly-288, and Gln-297.

Belongs to the ThiI family.

The protein localises to the cytoplasm. It catalyses the reaction [ThiI sulfur-carrier protein]-S-sulfanyl-L-cysteine + a uridine in tRNA + 2 reduced [2Fe-2S]-[ferredoxin] + ATP + H(+) = [ThiI sulfur-carrier protein]-L-cysteine + a 4-thiouridine in tRNA + 2 oxidized [2Fe-2S]-[ferredoxin] + AMP + diphosphate. The enzyme catalyses [ThiS sulfur-carrier protein]-C-terminal Gly-Gly-AMP + S-sulfanyl-L-cysteinyl-[cysteine desulfurase] + AH2 = [ThiS sulfur-carrier protein]-C-terminal-Gly-aminoethanethioate + L-cysteinyl-[cysteine desulfurase] + A + AMP + 2 H(+). The protein operates within cofactor biosynthesis; thiamine diphosphate biosynthesis. Catalyzes the ATP-dependent transfer of a sulfur to tRNA to produce 4-thiouridine in position 8 of tRNAs, which functions as a near-UV photosensor. Also catalyzes the transfer of sulfur to the sulfur carrier protein ThiS, forming ThiS-thiocarboxylate. This is a step in the synthesis of thiazole, in the thiamine biosynthesis pathway. The sulfur is donated as persulfide by IscS. The sequence is that of Probable tRNA sulfurtransferase from Aeropyrum pernix (strain ATCC 700893 / DSM 11879 / JCM 9820 / NBRC 100138 / K1).